The sequence spans 60 residues: MDVRRAQEIASSPVMANVTYNGQRIYIEHVDQQKGVATIHPLDNPNQKQSVPVASLEEHS.

The interval 39-60 is disordered; that stretch reads IHPLDNPNQKQSVPVASLEEHS.

Belongs to the SspH family.

The protein resides in the spore core. The chain is Small, acid-soluble spore protein H 1 from Geobacillus kaustophilus (strain HTA426).